The following is a 97-amino-acid chain: Putative defensin-like protein 227 (97 aa).

The first 26 residues, 1–26 (MKWATLFMVSCVLMFFVMNNINEVES), serve as a signal peptide directing secretion. Cystine bridges form between cysteine 35/cysteine 97, cysteine 45/cysteine 76, cysteine 53/cysteine 91, and cysteine 74/cysteine 93.

Belongs to the DEFL family.

It is found in the secreted. This is Putative defensin-like protein 227 (SCRL28) from Arabidopsis thaliana (Mouse-ear cress).